The following is a 172-amino-acid chain: Crossover junction endodeoxyribonuclease RuvC (172 aa).

Active-site residues include aspartate 7, glutamate 68, and aspartate 140. The Mg(2+) site is built by aspartate 7, glutamate 68, and aspartate 140.

Belongs to the RuvC family. Homodimer which binds Holliday junction (HJ) DNA. The HJ becomes 2-fold symmetrical on binding to RuvC with unstacked arms; it has a different conformation from HJ DNA in complex with RuvA. In the full resolvosome a probable DNA-RuvA(4)-RuvB(12)-RuvC(2) complex forms which resolves the HJ. The cofactor is Mg(2+).

Its subcellular location is the cytoplasm. The catalysed reaction is Endonucleolytic cleavage at a junction such as a reciprocal single-stranded crossover between two homologous DNA duplexes (Holliday junction).. Functionally, the RuvA-RuvB-RuvC complex processes Holliday junction (HJ) DNA during genetic recombination and DNA repair. Endonuclease that resolves HJ intermediates. Cleaves cruciform DNA by making single-stranded nicks across the HJ at symmetrical positions within the homologous arms, yielding a 5'-phosphate and a 3'-hydroxyl group; requires a central core of homology in the junction. The consensus cleavage sequence is 5'-(A/T)TT(C/G)-3'. Cleavage occurs on the 3'-side of the TT dinucleotide at the point of strand exchange. HJ branch migration catalyzed by RuvA-RuvB allows RuvC to scan DNA until it finds its consensus sequence, where it cleaves and resolves the cruciform DNA. The polypeptide is Crossover junction endodeoxyribonuclease RuvC (Polynucleobacter asymbioticus (strain DSM 18221 / CIP 109841 / QLW-P1DMWA-1) (Polynucleobacter necessarius subsp. asymbioticus)).